A 111-amino-acid polypeptide reads, in one-letter code: MSYPVTSQPQCANTCYQTQLSDWHTGLTDCCNDMPVCLCGTFAPLCLACRISDDFGECCCAPYLPGGLHSLRTGMRERYHIQGSVGHDWAALTFCLPCALCQMARELKIRE.

Belongs to the cornifelin family. As to quaternary structure, directly or indirectly cross-linked to CE proteins loricin and involucrin (IVL).

The protein localises to the cytoplasm. In terms of biological role, part of the insoluble cornified cell envelope (CE) of stratified squamous epithelia. The polypeptide is Cornifelin (Cnfn) (Mus musculus (Mouse)).